We begin with the raw amino-acid sequence, 509 residues long: Pituitary homeobox homolog Ptx1 (509 aa).

Residues Asn70–Val98 show a composition bias toward low complexity. Disordered regions lie at residues Asn70 to Ser125, Gln148 to Glu171, and Leu204 to Ser273. A compositionally biased stretch (polar residues) spans Arg227 to Ser242. The segment covering Gly243–Asp258 has biased composition (basic and acidic residues). The segment covering Lys259–Thr269 has biased composition (basic residues). Residues Lys262 to Arg322 constitute a DNA-binding region (homeobox). An OAR motif is present at residues Ser460–Ala473. Positions Thr464–Lys470 match the Nuclear localization signal motif.

The protein belongs to the paired homeobox family. Bicoid subfamily.

Its subcellular location is the nucleus. Appears to control physiological cell functions rather than pattern formation during embryogenesis. This is Pituitary homeobox homolog Ptx1 (Ptx1) from Drosophila melanogaster (Fruit fly).